A 137-amino-acid polypeptide reads, in one-letter code: Thionin BTH7 (137 aa).

The first 28 residues, 1-28, serve as a signal peptide directing secretion; that stretch reads MATNKSIKSVVICVLILGLVLEQVQVEG. 4 disulfide bridges follow: cysteine 31/cysteine 68, cysteine 32/cysteine 60, cysteine 40/cysteine 58, and cysteine 44/cysteine 54. Residues 75-137 constitute a propeptide, acidic domain; it reads LNLLPESGEP…DGEVIQSVEA (63 aa).

It belongs to the plant thionin (TC 1.C.44) family. 4 C-C subfamily.

The protein resides in the secreted. Functionally, thionins are small plant proteins which are toxic to animal cells. They seem to exert their toxic effect at the level of the cell membrane. Their precise function is not known. The sequence is that of Thionin BTH7 from Hordeum vulgare (Barley).